The following is a 94-amino-acid chain: Integration host factor subunit beta (94 aa).

The protein belongs to the bacterial histone-like protein family. As to quaternary structure, heterodimer of an alpha and a beta chain.

In terms of biological role, this protein is one of the two subunits of integration host factor, a specific DNA-binding protein that functions in genetic recombination as well as in transcriptional and translational control. This Buchnera aphidicola subsp. Acyrthosiphon pisum (strain 5A) protein is Integration host factor subunit beta.